The chain runs to 1399 residues: MNQEVMNLFNPTTPAQVFDQIRISIASPEKILSWSYGEIKKPETINYRTFKPERDGLFCARIFGPIKDYECLCGKYKRMKYKGIICEKCSVEVTLSRVRRERMGHIELAAPVAHIWFLKSLPSRIGLLLDMTLKDLERILYFEYYVVLEPGLTALKDRQLLSEEEYLRAQDEYGQDSFTAMIGAEAIRELLKGLELERLEAELRAEMQATESDIKHKKLAKRLKIVEAFRFSGNKPEWMILTVVPVIPPDLRPLVPLDGGRFATSDLNDLYRRVINRNNRLKRLMELRAPDIIIRNEKRMLQEAVDALFDNGRRGRVITGANKRPLKSLADMLKGKQGRFRQNLLGKRVDYSGRSVIVVGPELKLHQCGLPKKMALELFKPFIYSRLDAKGLSTTVKQAKKLVEKERPEVWDILDEVIREHPVLLNRAPTLHRLGIQAFEPTLIEGKAIQLHPLVCAAFNADFDGDQMAVHVPLSLEAQLEARVLMMSTNNILHPANGQPIIVPSQDIVLGLYYLSIMREGLPGEGKVFGDMAELEHALHSGVIHLHTSIKYRWDQTDENGEPIKRLIDTTAGRVMLGQVLPKSQKISFDAINKLMTKREISGVIDQVYRHCGQKETVIFCDRIMALGFYNAFKAGISFGKDDMVVPHGKWKIVDTTRALAKDFEQQYNDGLITHGEKYNKVVDAWSKATEEIAKEMMKEISSTKKDAKGIEAQINSIYMMAHSGARGSPAQMRQLAGMRGLMAKPSGEIIETPIISNFKEGLSVLEYFNSTHGARKGLADTALKTANSGYLTRRLVDVAQDCIITQDDCGTKLGIKMRAIVDAGTVVASLGSRILGRTACEDIRNPASNEVLIERNTLMEESHVDQISKAGIQEVKIRSALTCELINGICGKCYGRDLARGTPVNHGEAVGVIAAQSIGEPGTQLTMRTFHIGGAAQINEQSVIESNFDGKITIRNKAIARNGEGHLVAMVRNMVVAVVDADGTERATHRIQYGARMHVDEGDMVKRGQRIAEWDPYTRPVLTELEGTIGFEDLIEGQSISETLDESTGIAKRIVIDWRGTRGGADLRPAIVIKGKDGKVLKLPRGGDARYMLSVDAILSVDVGAKVKPGDILARISTESAKTRDITGGLPRVAELFEARRPKDAAIIAEIAGTIRFGRDYKNKRRISIEPVDQEEETREYLIPKGKHIHLQDGDIVEKGDFIVDGNPAPHDILAIKGIEELAAYLVNEIQEVYRLQGVLINDKHIEVIVRQMLQKVEIIDQGETDMISGEQIDKIEFDRLNLKAQEEGKKIATGTPVLLGITKASLQTRSFFSAASFQETTRVLTEAAVNGKVDPLEGLKENVIVGRLIPAGTGASMAKIREVAVKRDRLILDEREKQAAIVPSAPEAEPLALPPAE.

The Zn(2+) site is built by C71, C73, C86, and C89. Mg(2+) is bound by residues D462, D464, and D466. Positions 810, 884, 891, and 894 each coordinate Zn(2+).

It belongs to the RNA polymerase beta' chain family. As to quaternary structure, the RNAP catalytic core consists of 2 alpha, 1 beta, 1 beta' and 1 omega subunit. When a sigma factor is associated with the core the holoenzyme is formed, which can initiate transcription. The cofactor is Mg(2+). Requires Zn(2+) as cofactor.

The enzyme catalyses RNA(n) + a ribonucleoside 5'-triphosphate = RNA(n+1) + diphosphate. Its function is as follows. DNA-dependent RNA polymerase catalyzes the transcription of DNA into RNA using the four ribonucleoside triphosphates as substrates. The polypeptide is DNA-directed RNA polymerase subunit beta' (Nitrobacter winogradskyi (strain ATCC 25391 / DSM 10237 / CIP 104748 / NCIMB 11846 / Nb-255)).